Consider the following 1832-residue polypeptide: Zinc finger protein 646 (1832 aa).

8 C2H2-type zinc fingers span residues 8 to 31 (LSCS…ELLH), 48 to 70 (YRCQ…RRTH), 75 to 97 (FPCT…MRTH), 239 to 261 (YKCS…RQSH), 266 to 288 (YPCA…SRLH), 294 to 316 (YHCP…QQSH), 374 to 396 (FRCG…RKSH), and 401 to 424 (YPCS…RAHH). Residues 26–47 (HRELLHPSPNQDSEEADSIPRP) are disordered. Residues 94–108 (MRTHAPEGRRRHRPP) are compositionally biased toward basic residues. A disordered region spans residues 94 to 200 (MRTHAPEGRR…TNSARAPPLP (107 aa)). Over residues 313 to 329 (QQSHEGERQEPRWEEKG) the composition is skewed to basic and acidic residues. Positions 313–346 (QQSHEGERQEPRWEEKGMPTTNGHTDESSQDQLP) are disordered. Lys-451 participates in a covalent cross-link: Glycyl lysine isopeptide (Lys-Gly) (interchain with G-Cter in SUMO2). 2 consecutive C2H2-type zinc fingers follow at residues 465 to 487 (YKCS…RHSH) and 492 to 514 (YQCS…VRVH). Glycyl lysine isopeptide (Lys-Gly) (interchain with G-Cter in SUMO2) cross-links involve residues Lys-534 and Lys-557. The segment at 575 to 597 (HICSICGLLFEDAESLERHGLTH) adopts a C2H2-type 11 zinc-finger fold. The residue at position 612 (Ser-612) is a Phosphoserine. C2H2-type zinc fingers lie at residues 617–639 (FACR…RQTH) and 644–666 (FSCG…LRRH). A disordered region spans residues 660–810 (KNHLRRHSRR…QPNSSSHSAN (151 aa)). Basic residues predominate over residues 661–678 (NHLRRHSRRRSRRHRKRA). A Glycyl lysine isopeptide (Lys-Gly) (interchain with G-Cter in SUMO2) cross-link involves residue Lys-688. Over residues 735–767 (EGDKCGLERDETHFQGDKESGGTGEGLERKDAS) the composition is skewed to basic and acidic residues. Positions 798–810 (ATGQPNSSSHSAN) are enriched in polar residues. C2H2-type zinc fingers lie at residues 821-843 (HTCS…RPCH), 848-870 (YQCS…FQNH), and 881-904 (FLCC…RQAH). The disordered stretch occupies residues 901–931 (RQAHSSSGMTEGSEEEGEEEGVAEAAPARSP). Acidic residues predominate over residues 912 to 922 (GSEEEGEEEGV). A C2H2-type 17; degenerate zinc finger spans residues 958–980 (HICGCCGQTYDDLGSLERHHQSQ). 2 C2H2-type zinc fingers span residues 1052 to 1074 (FRCN…RKIH) and 1079 to 1101 (FLCP…LRNH). The tract at residues 1103 to 1148 (RCKGSEPQVGPIPEAAGSSELQVGPIPEGGSNKPQHMAEEGPGQAE) is disordered. Residues Lys-1157, Lys-1168, and Lys-1178 each participate in a glycyl lysine isopeptide (Lys-Gly) (interchain with G-Cter in SUMO2) cross-link. 6 C2H2-type zinc fingers span residues 1203-1225 (FSCE…RQSH), 1230-1252 (FGCQ…RRIH), 1258-1280 (FRCS…QRVH), 1299-1321 (FRCG…RRSH), 1326-1348 (YSCP…QRLH), and 1364-1386 (VRCA…LREH). Positions 1274–1294 (ASHQRVHMERRGGGGTRKATR) are disordered. 2 disordered regions span residues 1377-1481 (GSLE…WVPQ) and 1509-1529 (TLSH…QPGS). Residues 1378-1393 (SLERHLREHEETEREP) show a composition bias toward basic and acidic residues. Polar residues predominate over residues 1406-1417 (SEANLTGSQGLE). A compositionally biased stretch (basic and acidic residues) spans 1427–1438 (PHLEDGVPRPGE). Gly residues predominate over residues 1460-1475 (GKAGGWPVGGGLGNHS). C2H2-type zinc fingers lie at residues 1557–1579 (HYCL…SHNH), 1585–1607 (FACP…LQAH), 1677–1699 (FRCT…QKAH), 1704–1726 (YPCS…SRTH), 1732–1754 (HCCS…GRVH), and 1761–1783 (FTCP…QQQH). The tract at residues 1606-1672 (AHARGHSQVP…QAVTSMAAED (67 aa)) is disordered. Positions 1781–1832 (QQHQEEWTVAGSGAPVAPVTGRGDLPLPPPPTPTTPLLDPSPQWPADLSFSL) are disordered.

This sequence belongs to the krueppel C2H2-type zinc-finger protein family.

Its subcellular location is the nucleus. May be involved in transcriptional regulation. This Homo sapiens (Human) protein is Zinc finger protein 646.